We begin with the raw amino-acid sequence, 138 residues long: Putative pre-16S rRNA nuclease (138 aa).

This sequence belongs to the YqgF nuclease family.

Its subcellular location is the cytoplasm. Functionally, could be a nuclease involved in processing of the 5'-end of pre-16S rRNA. The sequence is that of Putative pre-16S rRNA nuclease from Salmonella dublin (strain CT_02021853).